The following is a 367-amino-acid chain: MAFKLWLLDEETIYEHVFERYTQLEGQSGKLAQDLGIQDRRGGVLEITFEPSGLEGGRKKKRVRRRNKASSVEEDQNVAVDSYHVSVGQSISSLHSSRDNGNSTTGYVLWSTTPFFINWLLYSTSAAPFRLGSQVEVTCGSSCEGHMLELPRLIDLTGADRGKRGILELGAGISGILPVILGNFVDTYVSTDQKGILNKLKDNIMENLSQLTRKRCISRSLRLELPTVEPVGDADITAASLPSKSTLHLEVAALDWEKINLQDKKTHSLHPELSLIGETCSSVYVIAMDVIYNEYLIDPFLKTLKQLKHWLQTTYNLQFHVLVGIHLRSQEVTTLFLEKAIIEYDFTVYDIVDQVIQESRFNFYLIT.

Positions 55 to 74 are disordered; that stretch reads EGGRKKKRVRRRNKASSVEE. The segment covering 58-68 has biased composition (basic residues); that stretch reads RKKKRVRRRNK. S-adenosyl-L-methionine is bound by residues Trp-110, 170–172, Asp-192, Trp-256, and Met-288; that span reads GAG.

The protein belongs to the class I-like SAM-binding methyltransferase superfamily. RKM5 family.

Functionally, S-adenosyl-L-methionine-dependent protein-lysine N-methyltransferase that monomethylates 60S ribosomal protein L1 (RPL1A and RPL1B) at 'Lys-46'. This is Ribosomal lysine N-methyltransferase 5 (RKM5) from Saccharomyces cerevisiae (strain Lalvin EC1118 / Prise de mousse) (Baker's yeast).